Here is a 295-residue protein sequence, read N- to C-terminus: Small ribosomal subunit protein bS1 (295 aa).

S1 motif domains follow at residues 28–97 (GQLV…VSLR), 115–179 (GQTV…LSER), and 193–261 (GQLI…LSTK).

The protein belongs to the bacterial ribosomal protein bS1 family.

Binds mRNA. The protein is Small ribosomal subunit protein bS1 (rpsA) of Synechococcus elongatus (strain ATCC 33912 / PCC 7942 / FACHB-805) (Anacystis nidulans R2).